Consider the following 97-residue polypeptide: Small ribosomal subunit protein eS25 (97 aa).

The segment at 1-24 is disordered; it reads MAPAASGAKKQKKKWSKGKVKDKA. Residues 9-18 show a composition bias toward basic residues; the sequence is KKQKKKWSKG.

This sequence belongs to the eukaryotic ribosomal protein eS25 family. As to quaternary structure, component of the small ribosomal subunit (SSU). Mature N.crassa ribosomes consist of a small (40S) and a large (60S) subunit. The 40S small subunit contains 1 molecule of ribosomal RNA (18S rRNA) and at least 32 different proteins. The large 60S subunit contains 3 rRNA molecules (26S, 5.8S and 5S rRNA) and at least 42 different proteins.

It localises to the cytoplasm. Functionally, component of the ribosome, a large ribonucleoprotein complex responsible for the synthesis of proteins in the cell. The small ribosomal subunit (SSU) binds messenger RNAs (mRNAs) and translates the encoded message by selecting cognate aminoacyl-transfer RNA (tRNA) molecules. The large subunit (LSU) contains the ribosomal catalytic site termed the peptidyl transferase center (PTC), which catalyzes the formation of peptide bonds, thereby polymerizing the amino acids delivered by tRNAs into a polypeptide chain. The nascent polypeptides leave the ribosome through a tunnel in the LSU and interact with protein factors that function in enzymatic processing, targeting, and the membrane insertion of nascent chains at the exit of the ribosomal tunnel. This Neurospora crassa (strain ATCC 24698 / 74-OR23-1A / CBS 708.71 / DSM 1257 / FGSC 987) protein is Small ribosomal subunit protein eS25 (rps-25).